The sequence spans 156 residues: Biotin carboxyl carrier protein of acetyl-CoA carboxylase (156 aa).

The Biotinyl-binding domain occupies 73 to 156; the sequence is PAAAEISGHI…EFDEPLVVIE (84 aa). Lys122 carries the post-translational modification N6-biotinyllysine.

Homodimer.

It functions in the pathway lipid metabolism; fatty acid biosynthesis. In terms of biological role, this protein is a component of the acetyl coenzyme A carboxylase complex; first, biotin carboxylase catalyzes the carboxylation of the carrier protein and then the transcarboxylase transfers the carboxyl group to form malonyl-CoA. The protein is Biotin carboxyl carrier protein of acetyl-CoA carboxylase (accB) of Escherichia coli O6:H1 (strain CFT073 / ATCC 700928 / UPEC).